The sequence spans 1505 residues: Anaphase-promoting complex subunit 1 (1505 aa).

This sequence belongs to the APC1 family. In terms of assembly, the APC/C complex is probably composed of at least 12 subunits: apc-2, apc-10, apc-11, cdc-26, emb-1, emb-27, emb-30, mat-1, mat-2, mat-3, such-1 and gfi-3.

It participates in protein modification; protein ubiquitination. Functionally, probable component of the anaphase promoting complex/cyclosome (APC/C), a cell cycle-regulated E3 ubiquitin ligase that controls progression through mitosis and the G1 phase of the cell cycle. The APC/C complex acts by mediating ubiquitination and subsequent degradation of target proteins. Developmental role in early embryogenesis and the metaphase to anaphase transition in oocyte and spermatocyte meiosis and mitosis in germ cells. Required for embryonic anterior-posterior axis formation. Plays a role in regulating the abundance of glr-1 receptors in postmitotic neurons, which may in turn control animal locomotion. Involved in regulating GABA neurotransmitter release at neuromuscular junctions in GABA motor neurons. This is Anaphase-promoting complex subunit 1 from Caenorhabditis elegans.